We begin with the raw amino-acid sequence, 376 residues long: Methionine import ATP-binding protein MetN 2 (376 aa).

A disordered region spans residues 1–25; that stretch reads MTATAQRQRPIDTTGAGQRAQQAEL. In terms of domain architecture, ABC transporter spans 34-273; the sequence is VRFINLGKTY…PQHEVSKTLL (240 aa). 70-77 serves as a coordination point for ATP; sequence GRSGAGKS.

This sequence belongs to the ABC transporter superfamily. Methionine importer (TC 3.A.1.24) family. As to quaternary structure, the complex is composed of two ATP-binding proteins (MetN), two transmembrane proteins (MetI) and a solute-binding protein (MetQ).

The protein resides in the cell inner membrane. It carries out the reaction L-methionine(out) + ATP + H2O = L-methionine(in) + ADP + phosphate + H(+). It catalyses the reaction D-methionine(out) + ATP + H2O = D-methionine(in) + ADP + phosphate + H(+). In terms of biological role, part of the ABC transporter complex MetNIQ involved in methionine import. Responsible for energy coupling to the transport system. The chain is Methionine import ATP-binding protein MetN 2 from Pseudomonas syringae pv. syringae (strain B728a).